Reading from the N-terminus, the 1025-residue chain is MKFFALFIYRPVATILLSVAITLCGILGFRMLPVAPLPQVDFPVIMVSASLPGASPETMASSVATPLERSLGRIAGVSEMTSSSSLGSTRIILQFDFDRDINGAARDVQAAINAAQSLLPSGMPSRPTYRKANPSDAPIMILTLTSDTYSQGELYDFASTQLAPTISQIDGVGDVDVGGSSLPAVRVGLNPQALFNQGVSLDDVRTAISNANVRKPQGALEDGTHRWQIQTNDELKTAAEYQPLIIHYNNGGAVRLGDVATVTDSVQDVRNAGMTNAKPAILLMIRKLPEANIIQTVDSIRAKLPELQETIPAAIDLQIAQDRSPTIRASLEEVEQTLIISVALVILVVFLFLRSGRATIIPAVAVPVSLIGTFAAMYLCGFSLNNLSLMALTIATGFVVDDAIVVLENIARHLEAGMKPLQAALQGTREVGFTVLSMSLSLVAVFLPLLLMGGLPGRLLREFAVTLSVAIGISLLVSLTLTPMMCGWMLKASKPREQKRLRGFGRMLVALQQGYGKSLKWVLNHTRLVGVVLLGTIALNIWLYISIPKTFFPEQDTGVLMGGIQADQSISFQAMRGKLQDFMKIIRDDPAVDNVTGFTGGSRVNSGMMFITLKPRDERSETAQQIIDRLRVKLAKEPGANLFLMAVQDIRVGGRQSNASYQYTLLSDDLAALREWEPKIRKKLATLPELADVNSDQQDNGAEMNLVYDRDTMARLGIDVQAANSLLNNAFGQRQISTIYQPMNQYKVVMEVDPRYTQDISALEKMFVINNEGKAIPLSYFAKWQPANAPLSVNHQGLSAASTISFNLPTGKSLSDASAAIDRAMTQLGVPSTVRGSFAGTAQVFQETMNSQVILIIAAIATVYIVLGILYESYVHPLTILSTLPSAGVGALLALELFNAPFSLIALIGIMLLIGIVKKNAIMMVDFALEAQRHGNLTPQEAIFQACLLRFRPIMMTTLAALFGALPLVLSGGDGSELRQPLGITIVGGLVMSQLLTLYTTPVVYLFFDRLRLRFSRKPKQTVTE.

Helical transmembrane passes span 3–23, 333–353, 360–380, 387–407, 431–451, 463–483, 528–548, 853–873, 875–895, 897–917, 953–973, and 984–1004; these read FFAL…AITL, EVEQ…FLFL, IIPA…MYLC, LSLM…IVVL, VGFT…PLLL, FAVT…TLTP, LVGV…ISIP, VILI…LYES, VHPL…LLAL, LFNA…IGIV, PIMM…LSGG, and ITIV…TPVV.

This sequence belongs to the resistance-nodulation-cell division (RND) (TC 2.A.6) family. MdtC subfamily. Part of a tripartite efflux system composed of MdtA, MdtB and MdtC. MdtC forms a heteromultimer with MdtB.

The protein resides in the cell inner membrane. The MdtABC tripartite complex confers resistance against novobiocin and deoxycholate. This chain is Multidrug resistance protein MdtC, found in Escherichia fergusonii (strain ATCC 35469 / DSM 13698 / CCUG 18766 / IAM 14443 / JCM 21226 / LMG 7866 / NBRC 102419 / NCTC 12128 / CDC 0568-73).